Reading from the N-terminus, the 192-residue chain is Leucine-rich repeat-containing protein 51 (192 aa).

LRR repeat units follow at residues 49–71 (SLTQ…NQVA), 80–101 (NLAW…LTTF), and 103–124 (NLSV…NKLA). The 39-residue stretch at 137 to 175 (NPMEEEKGYRQYVLCTLSRITTFDFAGVTKADRTTAEVW) folds into the LRRCT domain.

The protein resides in the cytoplasm. This chain is Leucine-rich repeat-containing protein 51, found in Pan troglodytes (Chimpanzee).